Consider the following 359-residue polypeptide: 3-dehydroquinate synthase (359 aa).

Residues 69-74 (DAETGK), 103-107 (GAATD), 127-128 (TT), Lys140, and Lys149 contribute to the NAD(+) site. Zn(2+)-binding residues include Glu182, His244, and His260.

It belongs to the sugar phosphate cyclases superfamily. Dehydroquinate synthase family. Co(2+) is required as a cofactor. It depends on Zn(2+) as a cofactor. NAD(+) serves as cofactor.

The protein localises to the cytoplasm. The enzyme catalyses 7-phospho-2-dehydro-3-deoxy-D-arabino-heptonate = 3-dehydroquinate + phosphate. It participates in metabolic intermediate biosynthesis; chorismate biosynthesis; chorismate from D-erythrose 4-phosphate and phosphoenolpyruvate: step 2/7. Catalyzes the conversion of 3-deoxy-D-arabino-heptulosonate 7-phosphate (DAHP) to dehydroquinate (DHQ). The chain is 3-dehydroquinate synthase from Corynebacterium diphtheriae (strain ATCC 700971 / NCTC 13129 / Biotype gravis).